The chain runs to 256 residues: Ribosomal RNA small subunit methyltransferase J (256 aa).

S-adenosyl-L-methionine is bound by residues 101-102, 117-118, 153-154, and D176; these read RD, ER, and SS.

Belongs to the methyltransferase superfamily. RsmJ family.

The protein localises to the cytoplasm. It catalyses the reaction guanosine(1516) in 16S rRNA + S-adenosyl-L-methionine = N(2)-methylguanosine(1516) in 16S rRNA + S-adenosyl-L-homocysteine + H(+). Its function is as follows. Specifically methylates the guanosine in position 1516 of 16S rRNA. This Photobacterium profundum (strain SS9) protein is Ribosomal RNA small subunit methyltransferase J.